Consider the following 397-residue polypeptide: Subtilisin-like protease 3 (397 aa).

The first 19 residues, 1–19, serve as a signal peptide directing secretion; it reads MGCIKVISVFLAAIAAVDA. Positions 20-116 are excised as a propeptide; sequence RAFFHNRGGS…VEHDRVVKLA (97 aa). An Inhibitor I9 domain is found at 35-116; it reads SYIVVMKDGV…VEHDRVVKLA (82 aa). Residues 126–397 form the Peptidase S8 domain; that stretch reads TWGLGRVSHR…NRLLYNGSGQ (272 aa). Active-site charge relay system residues include Asp-158 and His-189. N-linked (GlcNAc...) asparagine glycosylation is present at Asn-250. The active-site Charge relay system is the Ser-344. An N-linked (GlcNAc...) asparagine glycan is attached at Asn-393.

This sequence belongs to the peptidase S8 family.

It localises to the secreted. Functionally, secreted subtilisin-like serine protease with keratinolytic activity that contributes to pathogenicity. The protein is Subtilisin-like protease 3 (SUB3) of Trichophyton tonsurans (Scalp ringworm fungus).